A 772-amino-acid polypeptide reads, in one-letter code: Endoplasmic reticulum membrane sensor NFE2L1 (772 aa).

The helical; Signal-anchor for type II membrane protein transmembrane segment at 7–24 threads the bilayer; sequence YLTEGLLQFTILLSLIGV. A disordered region spans residues 108 to 148; it reads DPEGSVSGSQPNSGLALESSSGLQDVTGPDNGVRESETEQG. Positions 113–131 are enriched in polar residues; that stretch reads VSGSQPNSGLALESSSGLQ. Residues 191–199 form a cholesterol recognition/amino acid consensus (CRAC) region region; sequence VFDYSHRQK. Residue N348 is glycosylated (N-linked (GlcNAc...) asparagine). The CPD stretch occupies residues 379–383; it reads SPEVE. Residues N412 and N423 are each glycosylated (N-linked (GlcNAc...) asparagine). The tract at residues 470–532 is disordered; sequence EEEFDSDSGL…AVGYSSDSET (63 aa). The Destruction motif motif lies at 476–480; it reads DSGLS. The span at 476-523 shows a compositional bias: low complexity; that stretch reads DSGLSLDSSHSPSSLSSSEGSSSSSSSSSSSSSSASSSASSSFSEEGA. Residue S528 is modified to Phosphoserine; by CK2. Residue S599 is modified to Phosphoserine; by PKA. Residues 654–717 form the bZIP domain; that stretch reads LIRDIRRRGK…RQMKQKVQSL (64 aa). The segment at 656–675 is basic motif; the sequence is RDIRRRGKNKMAAQNCRKRK. A leucine-zipper region spans residues 682–696; it reads LERDVEDLQRDKARL. The disordered stretch occupies residues 753–772; the sequence is RTMADQQARRQERKPKDRRK. The Nuclear localization signal signature appears at 761-768; that stretch reads RRQERKPK. The segment covering 763–772 has biased composition (basic residues); sequence QERKPKDRRK.

It belongs to the bZIP family. CNC subfamily. Interacts with KEAP1. In terms of assembly, interacts (via CPD region) with FBXW7; leading to its ubiquitination and degradation. Interacts with SYVN1/HRD1; leading to its ubiquitination and degradation. Interacts (when ubiquitinated) with DDI2; leading to its cleavage. As to quaternary structure, interacts (via the bZIP domain) with small MAF protein (MAFF, MAFG or MAFK); required for binding to antioxidant response elements (AREs) on DNA. Interacts (via Destruction motif) with BTRC; leading to its ubiquitination and degradation. Interacts with CEBPB; the heterodimer represses expression of DSPP during odontoblast differentiation. Interacts with MOTS-c, a peptide produced by the mitochondrially encoded 12S rRNA MT-RNR1. In terms of processing, cleaved at Leu-104 by the aspartyl protease DDI2 following retrotranslocation, releasing the protein from the endoplasmic reticulum membrane and forming the transcription factor NRF1 that translocates into the nucleus. Ubiquitination is prerequisite for cleavage by aspartyl protease DDI2. N-glycosylated in normal conditions, when it has a single-pass type II membrane protein topology, with the DNA-binding domain facing the endoplasmic reticulum lumen. Deglycosylated during retrotranslocation to the cytosolic side of the membrane, to have a single-pass type III membrane protein topology with the major part of the protein facing the cytosol. Post-translationally, ubiquitinated by the SCF(FBXW7) complex and SYVN1/HRD1, leading to its degradation by the proteasome. Ubiquitinated during retrotranslocation to the cytosolic side of the membrane: ubiquitination does not lead to degradation and is required for processing by the aspartyl protease DDI2 and subsequent release from the endoplasmic reticulum membrane. In terms of processing, phosphorylation by CK2 at Ser-528 inhibits transcription factor activity, possibly by affecting DNA-binding activity. Phosphorylation at Ser-599 is required for interaction with CEBPB. Ubiquitinated by the SCF(BTRC) complex in the nucleus, leading to its degradation by the proteasome.

It is found in the endoplasmic reticulum membrane. The protein resides in the nucleus. Endoplasmic reticulum membrane sensor that translocates into the nucleus in response to various stresses to act as a transcription factor. Constitutes a precursor of the transcription factor NRF1. Able to detect various cellular stresses, such as cholesterol excess, oxidative stress or proteasome inhibition. In response to stress, it is released from the endoplasmic reticulum membrane following cleavage by the protease DDI2 and translocates into the nucleus to form the transcription factor NRF1. Acts as a key sensor of cholesterol excess: in excess cholesterol conditions, the endoplasmic reticulum membrane form of the protein directly binds cholesterol via its CRAC motif, preventing cleavage and release of the transcription factor NRF1, thereby allowing expression of genes promoting cholesterol removal, such as CD36. Involved in proteasome homeostasis: in response to proteasome inhibition, it is released from the endoplasmic reticulum membrane, translocates to the nucleus and activates expression of genes encoding proteasome subunits. Functionally, CNC-type bZIP family transcription factor that translocates to the nucleus and regulates expression of target genes in response to various stresses. Heterodimerizes with small-Maf proteins (MAFF, MAFG or MAFK) and binds DNA motifs including the antioxidant response elements (AREs), which regulate expression of genes involved in oxidative stress response. Activates or represses expression of target genes, depending on the context. Plays a key role in cholesterol homeostasis by acting as a sensor of cholesterol excess: in low cholesterol conditions, translocates into the nucleus and represses expression of genes involved in defense against cholesterol excess, such as CD36. In excess cholesterol conditions, the endoplasmic reticulum membrane form of the protein directly binds cholesterol via its CRAC motif, preventing cleavage and release of the transcription factor NRF1, thereby allowing expression of genes promoting cholesterol removal. Critical for redox balance in response to oxidative stress: acts by binding the AREs motifs on promoters and mediating activation of oxidative stress response genes, such as GCLC, GCLM, GSS, MT1 and MT2. Plays an essential role during fetal liver hematopoiesis: probably has a protective function against oxidative stress and is involved in lipid homeostasis in the liver. Involved in proteasome homeostasis: in response to proteasome inhibition, mediates the 'bounce-back' of proteasome subunits by translocating into the nucleus and activating expression of genes encoding proteasome subunits. Also involved in regulating glucose flux. Together with CEBPB; represses expression of DSPP during odontoblast differentiation. In response to ascorbic acid induction, activates expression of SP7/Osterix in osteoblasts. This is Endoplasmic reticulum membrane sensor NFE2L1 from Pongo abelii (Sumatran orangutan).